The primary structure comprises 528 residues: Phenylalanine--tRNA ligase alpha subunit (528 aa).

L-phenylalanine contacts are provided by threonine 365 and phenylalanine 444. Residue glutamate 446 participates in Mg(2+) binding. Position 469 (phenylalanine 469) interacts with L-phenylalanine.

Belongs to the class-II aminoacyl-tRNA synthetase family. Phe-tRNA synthetase alpha subunit type 2 subfamily. In terms of assembly, tetramer of two alpha and two beta subunits. Mg(2+) serves as cofactor.

It is found in the cytoplasm. It carries out the reaction tRNA(Phe) + L-phenylalanine + ATP = L-phenylalanyl-tRNA(Phe) + AMP + diphosphate + H(+). This is Phenylalanine--tRNA ligase alpha subunit from Borreliella burgdorferi (strain ATCC 35210 / DSM 4680 / CIP 102532 / B31) (Borrelia burgdorferi).